A 183-amino-acid polypeptide reads, in one-letter code: Segregation and condensation protein B (183 aa).

Belongs to the ScpB family. As to quaternary structure, homodimer. Homodimerization may be required to stabilize the binding of ScpA to the Smc head domains. Component of a cohesin-like complex composed of ScpA, ScpB and the Smc homodimer, in which ScpA and ScpB bind to the head domain of Smc. The presence of the three proteins is required for the association of the complex with DNA.

The protein localises to the cytoplasm. Its function is as follows. Participates in chromosomal partition during cell division. May act via the formation of a condensin-like complex containing Smc and ScpA that pull DNA away from mid-cell into both cell halves. This Streptococcus pyogenes serotype M1 protein is Segregation and condensation protein B.